The sequence spans 348 residues: D-lactate dehydrogenase kk1H (348 aa).

NAD(+)-binding positions include 158–159, D178, 208–209, 235–237, and D261; these read RI, CP, and TSR. R237 is a catalytic residue. Residue E266 is part of the active site. Residue H298 is the Proton donor of the active site.

Belongs to the D-isomer specific 2-hydroxyacid dehydrogenase family.

It functions in the pathway secondary metabolite biosynthesis. Functionally, D-lactate dehydrogenase; part of the gene cluster that mediates the biosynthesis of KK-1, a novel cyclic depsipeptide with 10 residues which is a promising active compound with high activity against many plant pathogens, especially Botrytis cinerea. Within the pathway, kk1H catalyzes in the synthesis of D-lactic acid from pyruvic acid, which is recognized by the A domain of the first kk1B module. The nonribosomal peptide synthetase (NRPS) kk1B catalyzes the elongation and cyclization of the decapeptide chain composed of 1 D-lactic acid residue (D-Lac), 1 pipecolic acid residue (Pip), 1 aspartic acid residue (Asp), 1 isoleucine residue (Ile), 1 glycine residue (Gly), 1 tyrosine residue (Tyr) and 4 valine residues (Val). The Asp, Ile and 3 Val residues are N-methylated by the 5 methyltransferase domains from the NRPS (found in modules 3, 5, 6, 7 and 9), whereas the Tyr residue is O-methylated by the cluster encoded O-methyltransferase kk1A. The thioesterase kk1J is likely to be involved in the corrective mechanism of peptide chain synthesis. The D-lactate dehydrogenase kk1H is involved in the synthesis of D-lactic acid from pyruvic acid, which is recognized by the A domain of the first kk1B module. The pyrroline-5-carboxylate reductase kk1I is involved in the synthesis of the L-pipecolic acid residue of KK-1 from delta-1-pyrroline-5-carboxylate (P5C), a metabolic intermediate of lysine. It still is unclear how kk1C and kk1D are involved in the production of KK-1. This Curvularia clavata protein is D-lactate dehydrogenase kk1H.